Here is a 143-residue protein sequence, read N- to C-terminus: Ayaconin (143 aa).

Positions 1–22 (MSFLFFLVVLISIGLWVGPCVA) are cleaved as a signal peptide.

Interacts with human F12 (inactive). Salivary gland.

It is found in the secreted. Its function is as follows. Inhibits the intrinsic blood coagulation pathway in the host by blocking activation of host coagulation factor XII (F12). The chain is Ayaconin from Lutzomyia ayacuchensis (Sand fly).